We begin with the raw amino-acid sequence, 626 residues long: Glucoamylase (626 aa).

Positions 1-19 are cleaved as a signal peptide; the sequence is MHLVSSLLVVGAAFQAVLG. Residues 20-35 constitute a propeptide that is removed on maturation; that stretch reads LPDPLHEKRHSDIIKR. Asparagine 106 carries an N-linked (GlcNAc...) asparagine glycan. A substrate-binding site is contributed by tryptophan 155. The N-linked (GlcNAc...) asparagine glycan is linked to asparagine 206. Aspartate 211 functions as the Proton acceptor in the catalytic mechanism. Glutamate 214 functions as the Proton donor in the catalytic mechanism. Asparagine 217 carries an N-linked (GlcNAc...) asparagine glycan. Residues 520–626 form the CBM20 domain; sequence CAADHEVLVT…STATLDDTWR (107 aa).

Belongs to the glycosyl hydrolase 15 family.

It catalyses the reaction Hydrolysis of terminal (1-&gt;4)-linked alpha-D-glucose residues successively from non-reducing ends of the chains with release of beta-D-glucose.. The sequence is that of Glucoamylase (gla-1) from Neurospora crassa (strain ATCC 24698 / 74-OR23-1A / CBS 708.71 / DSM 1257 / FGSC 987).